The following is a 1203-amino-acid chain: ATP-dependent helicase/nuclease subunit A (1203 aa).

The UvrD-like helicase ATP-binding domain occupies 4-472 (VKLTPEQNEA…IRLKENFRSR (469 aa)). 25-32 (ASAGSGKT) serves as a coordination point for ATP. The UvrD-like helicase C-terminal domain maps to 503-785 (VQGNITDYPV…RVMTFHKSKG (283 aa)).

It belongs to the helicase family. AddA subfamily. In terms of assembly, heterodimer of AddA and AddB/RexB. It depends on Mg(2+) as a cofactor.

The catalysed reaction is Couples ATP hydrolysis with the unwinding of duplex DNA by translocating in the 3'-5' direction.. The enzyme catalyses ATP + H2O = ADP + phosphate + H(+). Functionally, the heterodimer acts as both an ATP-dependent DNA helicase and an ATP-dependent, dual-direction single-stranded exonuclease. Recognizes the chi site generating a DNA molecule suitable for the initiation of homologous recombination. The AddA nuclease domain is required for chi fragment generation; this subunit has the helicase and 3' -&gt; 5' nuclease activities. This Lactococcus lactis subsp. lactis (strain IL1403) (Streptococcus lactis) protein is ATP-dependent helicase/nuclease subunit A.